A 29-amino-acid chain; its full sequence is Glucagon (29 aa).

At serine 2 the chain carries Phosphoserine.

The protein belongs to the glucagon family.

The protein resides in the secreted. Glucagon plays a key role in glucose metabolism and homeostasis. Regulates blood glucose by increasing gluconeogenesis and decreasing glycolysis. The protein is Glucagon (GCG) of Chinchilla chinchilla (Short-tailed chinchilla).